The primary structure comprises 185 residues: 3-hexulose-6-phosphate isomerase (185 aa).

In terms of domain architecture, SIS spans 29-172; the sequence is LADHILSSHQ…ILKLMEKKGL (144 aa). Residues S47 and 86–91 contribute to the substrate site; that span reads SGSGET. The active-site Proton acceptor is the E152.

Belongs to the SIS family. PHI subfamily. Homotetramer.

It carries out the reaction D-arabino-hex-3-ulose 6-phosphate = beta-D-fructose 6-phosphate. It participates in one-carbon metabolism; formaldehyde assimilation via RuMP pathway; D-fructose 6-phosphate from D-ribulose 5-phosphate and formaldehyde: step 2/2. Its function is as follows. Catalyzes the isomerization between 3-hexulose 6-phosphate and fructose 6-phosphate. Together with HxlA, may act as a formaldehyde detoxification system. This Bacillus subtilis (strain 168) protein is 3-hexulose-6-phosphate isomerase (hxlB).